The primary structure comprises 161 residues: Large ribosomal subunit protein bL17 (161 aa).

The span at 132-144 (ARAKRAEDNRKAL) shows a compositional bias: basic and acidic residues. Residues 132-161 (ARAKRAEDNRKALEAQQAQAEAETTGETKA) are disordered. Low complexity predominate over residues 145-161 (EAQQAQAEAETTGETKA).

This sequence belongs to the bacterial ribosomal protein bL17 family. In terms of assembly, part of the 50S ribosomal subunit. Contacts protein L32.

This is Large ribosomal subunit protein bL17 from Koribacter versatilis (strain Ellin345).